Reading from the N-terminus, the 93-residue chain is Small ribosomal subunit protein uS15 (93 aa).

The protein belongs to the universal ribosomal protein uS15 family. As to quaternary structure, part of the 30S ribosomal subunit. Forms a bridge to the 50S subunit in the 70S ribosome, contacting the 23S rRNA.

Its function is as follows. One of the primary rRNA binding proteins, it binds directly to 16S rRNA where it helps nucleate assembly of the platform of the 30S subunit by binding and bridging several RNA helices of the 16S rRNA. In terms of biological role, forms an intersubunit bridge (bridge B4) with the 23S rRNA of the 50S subunit in the ribosome. This is Small ribosomal subunit protein uS15 from Ehrlichia chaffeensis (strain ATCC CRL-10679 / Arkansas).